We begin with the raw amino-acid sequence, 553 residues long: Terpene synthase 16 (553 aa).

Residues aspartate 303, aspartate 307, and glutamate 457 each contribute to the Mg(2+) site. A DDXXD motif motif is present at residues 303 to 307 (DDTYD).

Belongs to the terpene synthase family. Tpsa subfamily. Requires Mg(2+) as cofactor. The cofactor is Mn(2+). Expressed in leaves, trichomes and flowers.

It participates in secondary metabolite biosynthesis; terpenoid biosynthesis. Sesquiterpene synthase involved in the biosynthesis of volatile compounds. No activity detected with geranyl diphosphate (GPP) and farnesyl diphosphate (FPP) as substrates. This chain is Terpene synthase 16, found in Solanum lycopersicum (Tomato).